Consider the following 1272-residue polypeptide: CST complex subunit CTC1 (1272 aa).

Belongs to the CTC1 family. Component of the CST complex, composed of CTC1, TEN1 and STN1. Interacts with POT1A.

The protein localises to the nucleus. The protein resides in the chromosome. It localises to the telomere. Its function is as follows. Component of the CST complex, a complex that binds to single-stranded DNA and is required to protect telomeres from DNA degradation. The CST complex binds single-stranded DNA with high affinity in a sequence-independent manner, while isolated subunits bind DNA with low affinity by themselves. Associates with enzymatically active telomerase. This is CST complex subunit CTC1 from Arabidopsis thaliana (Mouse-ear cress).